The primary structure comprises 98 residues: Aspartyl/glutamyl-tRNA(Asn/Gln) amidotransferase subunit C (98 aa).

The protein belongs to the GatC family. In terms of assembly, heterotrimer of A, B and C subunits.

It carries out the reaction L-glutamyl-tRNA(Gln) + L-glutamine + ATP + H2O = L-glutaminyl-tRNA(Gln) + L-glutamate + ADP + phosphate + H(+). The catalysed reaction is L-aspartyl-tRNA(Asn) + L-glutamine + ATP + H2O = L-asparaginyl-tRNA(Asn) + L-glutamate + ADP + phosphate + 2 H(+). In terms of biological role, allows the formation of correctly charged Asn-tRNA(Asn) or Gln-tRNA(Gln) through the transamidation of misacylated Asp-tRNA(Asn) or Glu-tRNA(Gln) in organisms which lack either or both of asparaginyl-tRNA or glutaminyl-tRNA synthetases. The reaction takes place in the presence of glutamine and ATP through an activated phospho-Asp-tRNA(Asn) or phospho-Glu-tRNA(Gln). The chain is Aspartyl/glutamyl-tRNA(Asn/Gln) amidotransferase subunit C from Beutenbergia cavernae (strain ATCC BAA-8 / DSM 12333 / CCUG 43141 / JCM 11478 / NBRC 16432 / NCIMB 13614 / HKI 0122).